Here is a 486-residue protein sequence, read N- to C-terminus: Elastin-binding protein EbpS (486 aa).

Positions 1–40 (MSNNFKDDFEKNRQSIDTNSHQDHTEDVEKDQSELEHQDT) are enriched in basic and acidic residues. Residues 1–314 (MSNNFKDDFE…NHDRDKERKK (314 aa)) form a disordered region. Topologically, residues 2–204 (SNNFKDDFEK…EPKEHHNGKK (203 aa)) are extracellular. The segment at 14-34 (QSIDTNSHQDHTEDVEKDQSE) is elastin-binding. Residues 64–85 (TNHNKQVHNESQTSEDNVQNEA) are compositionally biased toward polar residues. Composition is skewed to basic and acidic residues over residues 103–118 (EPSH…EEYY) and 126–143 (DKSH…DTIK). Residues 161-179 (EQSQQPKPYFTTGANQSET) are compositionally biased toward polar residues. Positions 180-199 (SKNEHDNDSVKQDQDEPKEH) are enriched in basic and acidic residues. Over residues 204-225 (KAAAIGAGTAGVAGAAGAMAAS) the composition is skewed to low complexity. The helical transmembrane segment at 205–225 (AAAIGAGTAGVAGAAGAMAAS) threads the bilayer. The Cytoplasmic segment spans residues 226–319 (KAKKHSNDAQ…KERKKGGMAK (94 aa)). Positions 233-246 (DAQNKSNSGKANNS) are enriched in polar residues. Over residues 247-259 (TEDKASQDKSKDH) the composition is skewed to basic and acidic residues. A compositionally biased stretch (low complexity) spans 278–297 (GAASKSASAASKPHASNNAS). A compositionally biased stretch (basic and acidic residues) spans 299–314 (NHDEHDNHDRDKERKK). Residues 320–340 (VLLPLIAAVLIIGALAIFGGM) traverse the membrane as a helical segment. Residues 341–486 (ALNNHNNGTK…IRNGQQIVIP (146 aa)) are Extracellular-facing. Residues 351-440 (ENKIANTNKN…QRQGGGQRHT (90 aa)) form a disordered region. Basic and acidic residues predominate over residues 361–398 (NADESKDKDTSKDASKDKSKSTDSDKSKEDQDKATKDE). Over residues 403-431 (QNNANQANNQAQNNQNQQQANQNQQQQQQ) the composition is skewed to low complexity. In terms of domain architecture, LysM spans 437 to 485 (QRHTVNGQENLYRIAIQYYGSGSPENVEKIRRANGLSGNNIRNGQQIVI).

Its subcellular location is the cell membrane. Its function is as follows. Promotes binding of soluble elastin peptides and tropoelastin to S.aureus cells although it is not able to promote bacterial adherence to immobilized elastin and, therefore, is not a microbial surface component recognizing adhesive matrix molecule (MSCRAMM). The chain is Elastin-binding protein EbpS (ebpS) from Staphylococcus aureus (strain USA300).